We begin with the raw amino-acid sequence, 309 residues long: Uracil phosphoribosyltransferase homolog (309 aa).

Residues 1-41 (MATELQCPDSMPCHNQQVNSASTPSPEQLRPGDPILDHAGG) form a disordered region. Polar residues predominate over residues 13–26 (CHNQQVNSASTPSP). A Phosphoserine modification is found at serine 25. GTP is bound by residues arginine 133, arginine 142, and 176 to 179 (EKGN). Arginine 186 lines the 5-phospho-alpha-D-ribose 1-diphosphate pocket. Arginine 203 and arginine 232 together coordinate GTP. 238 to 246 (YPILSTGNT) serves as a coordination point for 5-phospho-alpha-D-ribose 1-diphosphate. Uracil is bound at residue 299 to 301 (THF).

The protein belongs to the UPRTase family.

The protein localises to the cytoplasm. It is found in the nucleus. The protein is Uracil phosphoribosyltransferase homolog (UPRT) of Macaca fascicularis (Crab-eating macaque).